Here is a 139-residue protein sequence, read N- to C-terminus: Ribosome-binding factor A (139 aa).

Belongs to the RbfA family. As to quaternary structure, monomer. Binds 30S ribosomal subunits, but not 50S ribosomal subunits or 70S ribosomes.

It localises to the cytoplasm. Its function is as follows. One of several proteins that assist in the late maturation steps of the functional core of the 30S ribosomal subunit. Associates with free 30S ribosomal subunits (but not with 30S subunits that are part of 70S ribosomes or polysomes). Required for efficient processing of 16S rRNA. May interact with the 5'-terminal helix region of 16S rRNA. The sequence is that of Ribosome-binding factor A from Methylobacterium sp. (strain 4-46).